The following is a 313-amino-acid chain: Aspartate carbamoyltransferase catalytic subunit (313 aa).

Residues Arg59 and Thr60 each contribute to the carbamoyl phosphate site. Position 87 (Lys87) interacts with L-aspartate. Residues Arg109, His137, and Gln140 each contribute to the carbamoyl phosphate site. Residues Arg170 and Arg224 each coordinate L-aspartate. Residues Gly265 and Pro266 each contribute to the carbamoyl phosphate site.

The protein belongs to the aspartate/ornithine carbamoyltransferase superfamily. ATCase family. In terms of assembly, heterododecamer (2C3:3R2) of six catalytic PyrB chains organized as two trimers (C3), and six regulatory PyrI chains organized as three dimers (R2).

It catalyses the reaction carbamoyl phosphate + L-aspartate = N-carbamoyl-L-aspartate + phosphate + H(+). The protein operates within pyrimidine metabolism; UMP biosynthesis via de novo pathway; (S)-dihydroorotate from bicarbonate: step 2/3. Its function is as follows. Catalyzes the condensation of carbamoyl phosphate and aspartate to form carbamoyl aspartate and inorganic phosphate, the committed step in the de novo pyrimidine nucleotide biosynthesis pathway. In Rhizobium meliloti (strain 1021) (Ensifer meliloti), this protein is Aspartate carbamoyltransferase catalytic subunit.